A 209-amino-acid chain; its full sequence is Translation initiation factor IF-3 (209 aa).

It belongs to the IF-3 family. Monomer.

The protein resides in the cytoplasm. In terms of biological role, IF-3 binds to the 30S ribosomal subunit and shifts the equilibrium between 70S ribosomes and their 50S and 30S subunits in favor of the free subunits, thus enhancing the availability of 30S subunits on which protein synthesis initiation begins. This chain is Translation initiation factor IF-3, found in Chlorobium phaeovibrioides (strain DSM 265 / 1930) (Prosthecochloris vibrioformis (strain DSM 265)).